The primary structure comprises 83 residues: Salivary thrombin inhibitor anophelin (83 aa).

The first 22 residues, 1–22, serve as a signal peptide directing secretion; sequence MANKLVLISLLCVVLVAKITQA. A disordered region spans residues 25–51; sequence QYAPGDEPSYDEDTDDSDKLVENDTSI. Asn47 carries N-linked (GlcNAc...) asparagine glycosylation. Residues 54–83 are sufficient for host thrombin inhibition; the sequence is EDYAAIEASLSETFNTAADPGRRLGEGSKP. Residues 56–62 are blocks exosite I of host thrombin; sequence YAAIEAS. A disordered region spans residues 64–83; sequence SETFNTAADPGRRLGEGSKP. The blocks active site cleft of host thrombin in a reverse direction compared to substrates stretch occupies residues 72–75; it reads DPGR. The segment covering 73 to 83 has biased composition (basic and acidic residues); that stretch reads PGRRLGEGSKP.

Belongs to the anophelin family. In terms of assembly, interacts with human F2 (thrombin); the interaction results in thrombin inhibition. In terms of tissue distribution, salivary gland (at protein level).

The protein localises to the secreted. Increasing concentration of NaCl decreases affinity for thrombin. Salivary protein with anticoagulant activity that inhibits host thrombin (F2); binds to the proteinase in a reverse orientation (opposite to substrates). Inhibits thrombin-induced platelet aggregation. This chain is Salivary thrombin inhibitor anophelin, found in Anopheles albimanus (New world malaria mosquito).